The primary structure comprises 267 residues: 5'-nucleotidase SurE (267 aa).

4 residues coordinate a divalent metal cation: aspartate 9, aspartate 10, serine 40, and asparagine 97.

This sequence belongs to the SurE nucleotidase family. Requires a divalent metal cation as cofactor.

The protein localises to the cytoplasm. It carries out the reaction a ribonucleoside 5'-phosphate + H2O = a ribonucleoside + phosphate. Its function is as follows. Nucleotidase that shows phosphatase activity on nucleoside 5'-monophosphates. The protein is 5'-nucleotidase SurE of Helicobacter pylori (strain ATCC 700392 / 26695) (Campylobacter pylori).